We begin with the raw amino-acid sequence, 92 residues long: Small ribosomal subunit protein uS19 (92 aa).

The protein belongs to the universal ribosomal protein uS19 family.

In terms of biological role, protein S19 forms a complex with S13 that binds strongly to the 16S ribosomal RNA. The chain is Small ribosomal subunit protein uS19 from Bacillus pumilus (strain SAFR-032).